The chain runs to 2397 residues: MAYPLVVSFFLYIVILDKHAWCAPFNNLLTDWNLNTNVSALDPSDYWGEWENHEFFPSPEHWRFPIYTIAIDKWVDGDPTNNDFSGTRFEYDIYETEFRNGGDIIGVRQSLDYLQGMGVKAVYFAGTPFVNMPWGADQYSPLDFTLLDPHLGTINDWRGTIEEMHSKGMYVIVDLTVATLADLIGFEGFTNTTTPFTFIEHNALWKGEDRYADWNFTNSWDPDCELPRFWGESGEPVVVEWTGCYNSDFDQYGDTEAFGSHPDWQRQLSKFASVQDRLREWKPSVASKLKRLSCLVISMLDVDGFRIDKATQMTVDFLVDWAKSVRLCANRFNKSNFFIPGEVTGPSSFGAIYYNRGRQPNQRPANLIDALNATSSDNVYFLREEGENALDASAFHYSVYRIILRFLRMDGLMEIPYDLPVDLAEAWHQIVINEDSFNPKTEKYDPRHLYGVSNYDVFRWASVADGSRRLILGTMMTFFLFPGAPLIYYGDEQGLYVLDNSANNYLYGRQSMAAAPAWYIHGCYSGSSSTYPAIDLSPAKIGCLDIWNSLDHFDPSRIERQLFIEFQDIRSRYSALTHGWKSELLGNWTNIEYLPNSGINPSNVGTFSMVRGAINSLQNISSEYNFPGVKTSSSDVWILFTNSNVSVNLKSNCFSKEAIVSPFISGTKIKNLVYPYDEYQLEASSHFSQISNTEPMGCLPELGLDGYGYKLFVPINEYIPRRPFITKFSPSHDSRLVIPLEKLRIIVEFSEEMDCKSISKSLLITSKTLNGDSPVLDESSVTCQKINDKDRVRFSGQSSSLFRWSATFSNIADGIHRISFNNASTADGKDFTHSVDHFLLRVGSLNNPIVFSSANYSYDLLQKENNSVYIKHAAIGADMFRYSLDFGSTWTEWQTYDGNNTYCNLSGWSQSSRYGWKGHHIMVQYWSELTGSSNYMQESDLEYPYKRWFPHVFMDSDYTQWTHDSDIRNRMLPLENGSFLGYHIADVYPSALQFNVWGLNKDGKADKSFIYGSLQNNSFLSRVSPSSLEENVFYIQHPPPKSYLSWSVTFDPQRRRYYINPSGCVFVSLGIYLSSLIVPLLTGVLAVYIFKKKFYHVKFNAFGTSKQNLHFRQHDVLGMKNLFNFSCSNKIKGEEVLNDGDKGKRRTVLLATLEYDIPSLNICIKIGGLGVMAQLMARHLEHEDIIWVIPCVGDVSYSNVEEDDPIEVVIIDQTYFINVYKYVIGNIIYILLDAPIFRRQTSGKPYPSRADDLSSAIFYSAWNQCIASVISRNNIDLYHMNDYHGSLAPLYLLPKIIPVALSLHNAEFQGLWPLRNSSEKEEVCSVFNISKSVCSKYVQFGNVFNLLHAGASYIRIHQKGYGVVGVSSKYGKRSWARYPIFWGLRKIGKLPNPDPADNGTNFKDLDANSMNEFENIKAKHKRSAQEWANLNIDPEADLLIFVGRWTLQKGIDLIADITPTLLENFNSQIVVVGPVIDLYGKFAAEKFTALMKKYPGRIYSRPLFTQLPSYIFSGADFALIPSRDEPFGLVAVEFGRKGTLGIGAKVGGLGQMPGWWYTIESNTTAHLLCQFEEACRQALTSSKSVRTKLRAISTIQRFPVSEWVSKLDTHVRNCIKFSHKQNLEEDFIHEPVIDVDEFAISSSKDIDADEDLEIIGSSDNKAIDSNGEGFLIEKDNIGTGSYSNQQSFDFKSSESDSFPQKSPSVESFSIIDNDNPFHEGQNSSTGYKDIVQGLLAENGVSEAGVDVMTSIVSSTIPIVSNHQTEGSQMFNEISSVSSIHVYHDESQPPVEMPAESDTPLQNKLYHPGMWSSSDIRIPNNSSQLSIDSVRSGMRPFSLSKVPHQFDDEEGKALQIFREKLKDLNCKNSMNEMCIENFLMKCTRKYFDEVRKLRLGTLKPENLQFVKDPSSLALETNLLPASDTIEEKNDVGNKQVNSHILDPGFLKEEECVYEFEQLHGLRKALQVEIYGWPLYTILLAIGQVLAATSFQLNLFSDTPDQPEYQSYIVCSVYISASLFWYILHSLVPNIYALSTPFIIYATAFALAGLTTFSSLGDSRLWISRVATWIYSIASGSQALFFSLNFGNEGRYDILYWIVRACFIQGSQQVWSAALWYWGSYSTDKPNRMGVSGKLNPQPWMAAITWPIALVLLAIAFVVYRGLPNFYRQCPSKIPAFYRSLFRRRLIMWFFISVFLQNYWMSSVYGRSWAFMWSAHNVHKWAMFLLVILFYVAIWIALVALLASLSRYHSWILPILGLGFGAPRWLQTLWGTSNIGIYVPFLGKGAPYLSRMLWLYLGLLDTVQTVGIGIILLQTLTREHITVVLITGQIVGAIASMVGKASSPSKFGPGDVFIDFTHWSVKDGPQILASIPFWVCLICQLSVIIGYFLFFRRENLSRP.

Positions 1683-1705 are disordered; sequence SNQQSFDFKSSESDSFPQKSPSV. Residues 1687 to 1698 are compositionally biased toward low complexity; it reads SFDFKSSESDSF.

It belongs to the glycosyltransferase group 1 family.

The catalysed reaction is [(1-&gt;3)-alpha-D-glucosyl](n) + UDP-alpha-D-glucose = [(1-&gt;3)-alpha-D-glucosyl](n+1) + UDP + H(+). This Schizosaccharomyces pombe (strain 972 / ATCC 24843) (Fission yeast) protein is Cell wall alpha-1,3-glucan synthase mok11 (mok11).